A 71-amino-acid polypeptide reads, in one-letter code: MSTKKTFEENLQDLEAIVTKLETGDVALEDAIAEFQKGMVLSKDLQKTLEDAEKTLVKVMQADGTEMEMDA.

The protein belongs to the XseB family. Heterooligomer composed of large and small subunits.

It localises to the cytoplasm. The catalysed reaction is Exonucleolytic cleavage in either 5'- to 3'- or 3'- to 5'-direction to yield nucleoside 5'-phosphates.. Functionally, bidirectionally degrades single-stranded DNA into large acid-insoluble oligonucleotides, which are then degraded further into small acid-soluble oligonucleotides. This is Exodeoxyribonuclease 7 small subunit from Streptococcus thermophilus (strain ATCC BAA-250 / LMG 18311).